A 1408-amino-acid polypeptide reads, in one-letter code: TSET complex member tstA (1408 aa).

3 disordered regions span residues 259–347 (FWPT…SIIA), 998–1055 (QQSS…AVGS), and 1091–1139 (SSSS…TNLN). The span at 266 to 308 (NNNNNNNNQQINNNNNNNNNNNNNNNNNNNNNNNNNNNNNQNN) shows a compositional bias: low complexity. Over residues 309 to 318 (LINGISSMNL) the composition is skewed to polar residues. 2 stretches are compositionally biased toward low complexity: residues 319–347 (SSIT…SIIA) and 998–1051 (QQSS…ISTS).

The protein belongs to the TPLATE family. In terms of assembly, component of the TSET complex, a heterohexamer composed of tstA, tstB, tstC, tstD, tstE and tstF, which may act in plasma membrane turnover. tstA, tstB, tstC and tstD are likely to be the core complex members with tstE and tstF acting as associated scaffold proteins.

This is TSET complex member tstA from Dictyostelium discoideum (Social amoeba).